Here is a 319-residue protein sequence, read N- to C-terminus: 2-dehydropantoate 2-reductase (319 aa).

Residues 10-15 and asparagine 105 contribute to the NADP(+) site; that span reads GTGALG. Asparagine 105 serves as a coordination point for substrate. Lysine 192 functions as the Proton donor in the catalytic mechanism. Substrate is bound by residues asparagine 196, asparagine 200, and serine 262. Residue glutamate 274 participates in NADP(+) binding.

This sequence belongs to the ketopantoate reductase family.

Its subcellular location is the cytoplasm. It catalyses the reaction (R)-pantoate + NADP(+) = 2-dehydropantoate + NADPH + H(+). It participates in cofactor biosynthesis; (R)-pantothenate biosynthesis; (R)-pantoate from 3-methyl-2-oxobutanoate: step 2/2. Catalyzes the NADPH-dependent reduction of ketopantoate into pantoic acid. This chain is 2-dehydropantoate 2-reductase, found in Nostoc sp. (strain PCC 7120 / SAG 25.82 / UTEX 2576).